A 216-amino-acid polypeptide reads, in one-letter code: Acyl-homoserine-lactone synthase (216 aa).

Belongs to the autoinducer synthase family.

It carries out the reaction a fatty acyl-[ACP] + S-adenosyl-L-methionine = an N-acyl-L-homoserine lactone + S-methyl-5'-thioadenosine + holo-[ACP] + H(+). In terms of biological role, required for the synthesis of OHHL (N-(3-oxohexanoyl)-L-homoserine lactone), an autoinducer molecule which binds to CarR and thus acts in the control of the biosynthesis of carbapenem antibiotics. The sequence is that of Acyl-homoserine-lactone synthase (carI) from Pectobacterium carotovorum subsp. carotovorum (Erwinia carotovora subsp. carotovora).